We begin with the raw amino-acid sequence, 178 residues long: Interleukin-10 (178 aa).

The N-terminal stretch at 1–18 (MPNPVLLYCLVLLAGMGT) is a signal peptide. 2 disulfide bridges follow: Cys30–Cys126 and Cys80–Cys132. Asn134 carries an N-linked (GlcNAc...) asparagine glycan.

The protein belongs to the IL-10 family. In terms of assembly, homodimer. Interacts with IL10RA and IL10RB.

The protein resides in the secreted. In terms of biological role, major immune regulatory cytokine that acts on many cells of the immune system where it has profound anti-inflammatory functions, limiting excessive tissue disruption caused by inflammation. Mechanistically, IL10 binds to its heterotetrameric receptor comprising IL10RA and IL10RB leading to JAK1 and STAT2-mediated phosphorylation of STAT3. In turn, STAT3 translocates to the nucleus where it drives expression of anti-inflammatory mediators. Targets antigen-presenting cells (APCs) such as macrophages and monocytes and inhibits their release of pro-inflammatory cytokines including granulocyte-macrophage colony-stimulating factor /GM-CSF, granulocyte colony-stimulating factor/G-CSF, IL-1 alpha, IL-1 beta, IL-6, IL-8 and TNF-alpha. Also interferes with antigen presentation by reducing the expression of MHC-class II and co-stimulatory molecules, thereby inhibiting their ability to induce T cell activation. In addition, controls the inflammatory response of macrophages by reprogramming essential metabolic pathways including mTOR signaling. This Marmota monax (Woodchuck) protein is Interleukin-10 (IL10).